The chain runs to 41 residues: Photosystem I reaction center subunit IX (41 aa).

A helical membrane pass occupies residues 7 to 27 (YLSTVPVVFAIWLTFTAGLII).

Belongs to the PsaJ family.

It localises to the plastid. It is found in the chloroplast thylakoid membrane. May help in the organization of the PsaE and PsaF subunits. The sequence is that of Photosystem I reaction center subunit IX from Bigelowiella natans (Pedinomonas minutissima).